The following is an 866-amino-acid chain: Probable outer membrane usher protein ElfC (866 aa).

A signal peptide spans 1 to 35; that stretch reads MYRTHRQHSLLSSGGVPSFIGGLVVFVSAAFNAQA.

The protein belongs to the fimbrial export usher family.

It is found in the cell outer membrane. Its function is as follows. Part of the elfADCG-ycbUVF fimbrial operon, which promotes adhesion of bacteria to different abiotic surfaces. Could be involved in the export and assembly of the ElfA fimbrial subunits across the outer membrane. The sequence is that of Probable outer membrane usher protein ElfC (elfC) from Escherichia coli (strain K12).